Reading from the N-terminus, the 272-residue chain is Acetylglutamate kinase (272 aa).

Substrate is bound by residues 46 to 47 (GA), Arg68, and Asn166.

This sequence belongs to the acetylglutamate kinase family. ArgB subfamily.

The protein localises to the cytoplasm. The catalysed reaction is N-acetyl-L-glutamate + ATP = N-acetyl-L-glutamyl 5-phosphate + ADP. Its pathway is amino-acid biosynthesis; L-arginine biosynthesis; N(2)-acetyl-L-ornithine from L-glutamate: step 2/4. Its function is as follows. Catalyzes the ATP-dependent phosphorylation of N-acetyl-L-glutamate. This chain is Acetylglutamate kinase, found in Dehalococcoides mccartyi (strain ATCC BAA-2266 / KCTC 15142 / 195) (Dehalococcoides ethenogenes (strain 195)).